A 225-amino-acid chain; its full sequence is NAD(P)H-quinone oxidoreductase subunit K, chloroplastic (225 aa).

Residues Cys-43, Cys-44, Cys-108, and Cys-139 each contribute to the [4Fe-4S] cluster site.

The protein belongs to the complex I 20 kDa subunit family. In terms of assembly, NDH is composed of at least 16 different subunits, 5 of which are encoded in the nucleus. It depends on [4Fe-4S] cluster as a cofactor.

Its subcellular location is the plastid. The protein localises to the chloroplast thylakoid membrane. The enzyme catalyses a plastoquinone + NADH + (n+1) H(+)(in) = a plastoquinol + NAD(+) + n H(+)(out). The catalysed reaction is a plastoquinone + NADPH + (n+1) H(+)(in) = a plastoquinol + NADP(+) + n H(+)(out). NDH shuttles electrons from NAD(P)H:plastoquinone, via FMN and iron-sulfur (Fe-S) centers, to quinones in the photosynthetic chain and possibly in a chloroplast respiratory chain. The immediate electron acceptor for the enzyme in this species is believed to be plastoquinone. Couples the redox reaction to proton translocation, and thus conserves the redox energy in a proton gradient. This is NAD(P)H-quinone oxidoreductase subunit K, chloroplastic from Arabidopsis thaliana (Mouse-ear cress).